A 1065-amino-acid polypeptide reads, in one-letter code: Isoleucine--tRNA ligase (1065 aa).

A 'HIGH' region motif is present at residues 49 to 59; sequence PYVSGAIHLGT. Positions 625-629 match the 'KMSKS' region motif; that stretch reads KMSKS. Lys-628 lines the ATP pocket.

Belongs to the class-I aminoacyl-tRNA synthetase family. IleS type 2 subfamily. In terms of assembly, monomer. Zn(2+) is required as a cofactor.

Its subcellular location is the cytoplasm. It catalyses the reaction tRNA(Ile) + L-isoleucine + ATP = L-isoleucyl-tRNA(Ile) + AMP + diphosphate. Catalyzes the attachment of isoleucine to tRNA(Ile). As IleRS can inadvertently accommodate and process structurally similar amino acids such as valine, to avoid such errors it has two additional distinct tRNA(Ile)-dependent editing activities. One activity is designated as 'pretransfer' editing and involves the hydrolysis of activated Val-AMP. The other activity is designated 'posttransfer' editing and involves deacylation of mischarged Val-tRNA(Ile). The chain is Isoleucine--tRNA ligase from Thermococcus kodakarensis (strain ATCC BAA-918 / JCM 12380 / KOD1) (Pyrococcus kodakaraensis (strain KOD1)).